A 244-amino-acid chain; its full sequence is tRNA (guanine-N(7)-)-methyltransferase (244 aa).

The S-adenosyl-L-methionine site is built by E74, E99, D126, and D149. D149 is a catalytic residue. Residues K153, D185, and 222–225 (TKFE) contribute to the substrate site.

This sequence belongs to the class I-like SAM-binding methyltransferase superfamily. TrmB family.

The enzyme catalyses guanosine(46) in tRNA + S-adenosyl-L-methionine = N(7)-methylguanosine(46) in tRNA + S-adenosyl-L-homocysteine. Its pathway is tRNA modification; N(7)-methylguanine-tRNA biosynthesis. Catalyzes the formation of N(7)-methylguanine at position 46 (m7G46) in tRNA. The protein is tRNA (guanine-N(7)-)-methyltransferase of Colwellia psychrerythraea (strain 34H / ATCC BAA-681) (Vibrio psychroerythus).